The sequence spans 227 residues: Ribosomal RNA small subunit methyltransferase G (227 aa).

Residues Gly-81, Leu-86, 131–132, and Arg-149 each bind S-adenosyl-L-methionine; that span reads AE.

It belongs to the methyltransferase superfamily. RNA methyltransferase RsmG family.

It is found in the cytoplasm. Specifically methylates the N7 position of guanine in position 518 of 16S rRNA. The protein is Ribosomal RNA small subunit methyltransferase G of Rhodococcus jostii (strain RHA1).